Here is a 402-residue protein sequence, read N- to C-terminus: Triose phosphate/phosphate translocator, chloroplastic (402 aa).

Residues 1–72 (MESRVLSRAT…KGASLLRPCP (72 aa)) constitute a chloroplast transit peptide. Over 73 to 96 (ATAGGNDSAGEEKVAPVGFFSRYP) the chain is Chloroplast intermembrane. A helical transmembrane segment spans residues 97-117 (ALTTGFFFFTWYFLNVIFNIL). The Lumenal portion of the chain corresponds to 118–129 (NKKIYNYFPYPY). A helical membrane pass occupies residues 130 to 150 (FVSVIHLAVGVVYCLVSWTVG). Over 151–207 (LPKRAPIDGNLLKLLIPVAVCHALGHVTSNVSFAAVAVSFTHTVKALEPFFNAAASQ) the chain is Chloroplast intermembrane. Residues 208 to 228 (FILGQSIPITLWLSLAPVVIG) form a helical membrane-spanning segment. Residues 229-272 (VSMASLTELSFNWLGFISAMISNISFTYRSIYSKKAMTDMDSTN) are Lumenal-facing. A helical transmembrane segment spans residues 273 to 292 (IYAYISIIALIVCIPPALII). Over 293–370 (EGPTLLKTGF…IIFGNKISTQ (78 aa)) the chain is Chloroplast intermembrane. The helical transmembrane segment at 371–391 (TGIGTGIAIAGVALYSFIKAQ) threads the bilayer. Residues 392–402 (IEEEKRQAKAA) are Lumenal-facing.

It belongs to the TPT transporter family. TPT (TC 2.A.7.9) subfamily. In terms of assembly, homodimer.

It is found in the plastid. Its subcellular location is the chloroplast membrane. Mediates the export of fixed carbons from the chloroplasts into the cytosol in the form of triose phosphates. The protein is Triose phosphate/phosphate translocator, chloroplastic of Pisum sativum (Garden pea).